Here is a 341-residue protein sequence, read N- to C-terminus: tRNA N6-adenosine threonylcarbamoyltransferase (341 aa).

The Fe cation site is built by histidine 112 and histidine 116. Residues 134–138, aspartate 167, glycine 180, and asparagine 279 each bind substrate; that span reads LASGG. Residue aspartate 307 participates in Fe cation binding.

This sequence belongs to the KAE1 / TsaD family. Requires Fe(2+) as cofactor.

It localises to the cytoplasm. The enzyme catalyses L-threonylcarbamoyladenylate + adenosine(37) in tRNA = N(6)-L-threonylcarbamoyladenosine(37) in tRNA + AMP + H(+). Functionally, required for the formation of a threonylcarbamoyl group on adenosine at position 37 (t(6)A37) in tRNAs that read codons beginning with adenine. Is involved in the transfer of the threonylcarbamoyl moiety of threonylcarbamoyl-AMP (TC-AMP) to the N6 group of A37, together with TsaE and TsaB. TsaD likely plays a direct catalytic role in this reaction. In Rickettsia bellii (strain OSU 85-389), this protein is tRNA N6-adenosine threonylcarbamoyltransferase.